The sequence spans 261 residues: ATP synthase subunit a (261 aa).

Helical transmembrane passes span 45–65, 107–127, 133–153, 162–182, 209–229, and 232–252; these read ITNVTMWMAIAVLVIAAILVL, VMTLFLFVLCGNVLGLLPLSF, MAVTVPLALMVFVGVTALGFM, MFWVTSAPLAIRPVLAVIEVI, IAGFASIAVVSPVVVGAVTAI, and LELLVAVVQAYVFTILTCVYL.

This sequence belongs to the ATPase A chain family. In terms of assembly, F-type ATPases have 2 components, CF(1) - the catalytic core - and CF(0) - the membrane proton channel. CF(1) has five subunits: alpha(3), beta(3), gamma(1), delta(1), epsilon(1). CF(0) has four main subunits: a, b, b' and c.

It localises to the cell inner membrane. Its function is as follows. Key component of the proton channel; it plays a direct role in the translocation of protons across the membrane. This chain is ATP synthase subunit a, found in Cereibacter sphaeroides (strain ATCC 17025 / ATH 2.4.3) (Rhodobacter sphaeroides).